We begin with the raw amino-acid sequence, 559 residues long: CTP synthase (559 aa).

An amidoligase domain region spans residues Met-1–Ile-270. Ser-13 contributes to the CTP binding site. Ser-13 contacts UTP. ATP-binding positions include Ser-14–Ile-19 and Asp-71. Mg(2+) is bound by residues Asp-71 and Glu-144. CTP contacts are provided by residues Asp-151–Glu-153, Lys-191–Gln-196, and Lys-227. UTP-binding positions include Lys-191–Gln-196 and Lys-227. Residues Ser-295–Arg-547 enclose the Glutamine amidotransferase type-1 domain. Residue Gly-356 coordinates L-glutamine. Residue Cys-383 is the Nucleophile; for glutamine hydrolysis of the active site. Residues Leu-384–Gln-387, Glu-407, and Arg-473 contribute to the L-glutamine site. Residues His-520 and Glu-522 contribute to the active site.

Belongs to the CTP synthase family. Homotetramer.

The enzyme catalyses UTP + L-glutamine + ATP + H2O = CTP + L-glutamate + ADP + phosphate + 2 H(+). The catalysed reaction is L-glutamine + H2O = L-glutamate + NH4(+). It catalyses the reaction UTP + NH4(+) + ATP = CTP + ADP + phosphate + 2 H(+). The protein operates within pyrimidine metabolism; CTP biosynthesis via de novo pathway; CTP from UDP: step 2/2. Allosterically activated by GTP, when glutamine is the substrate; GTP has no effect on the reaction when ammonia is the substrate. The allosteric effector GTP functions by stabilizing the protein conformation that binds the tetrahedral intermediate(s) formed during glutamine hydrolysis. Inhibited by the product CTP, via allosteric rather than competitive inhibition. Catalyzes the ATP-dependent amination of UTP to CTP with either L-glutamine or ammonia as the source of nitrogen. Regulates intracellular CTP levels through interactions with the four ribonucleotide triphosphates. This Variovorax paradoxus (strain S110) protein is CTP synthase.